We begin with the raw amino-acid sequence, 1208 residues long: DNA-directed RNA polymerase subunit beta (1208 aa).

Residues glutamate 1182–aspartate 1208 are disordered.

This sequence belongs to the RNA polymerase beta chain family. In terms of assembly, the RNAP catalytic core consists of 2 alpha, 1 beta, 1 beta' and 1 omega subunit. When a sigma factor is associated with the core the holoenzyme is formed, which can initiate transcription.

The catalysed reaction is RNA(n) + a ribonucleoside 5'-triphosphate = RNA(n+1) + diphosphate. In terms of biological role, DNA-dependent RNA polymerase catalyzes the transcription of DNA into RNA using the four ribonucleoside triphosphates as substrates. The sequence is that of DNA-directed RNA polymerase subunit beta from Enterococcus faecium (Streptococcus faecium).